The chain runs to 546 residues: Probable Dol-P-Man:Man(7)GlcNAc(2)-PP-Dol alpha-1,6-mannosyltransferase (546 aa).

Helical transmembrane passes span 5–25 (ESICWYLANILLVTCIGYYSY), 67–87 (FIPSLFIAVLSYIPSWFVNPL), 113–133 (FGTLSGALFILFSCAQFHLVY), 166–186 (ILVFAAAIVRSEIALLLMCLI), 200–220 (LLLVGISSSLAAVGASFLIDS), 258–278 (LPWLFLNPTTLLFLLISFVYI), 283–303 (LLIYVPLFFIFVYSFLGHKEW), 305–325 (FIIYSIPWFNAASAIGASLCF), and 340–360 (LMFFSGIIFGFIGSSFLLYVF).

The protein belongs to the glycosyltransferase 22 family.

It localises to the endoplasmic reticulum membrane. It carries out the reaction an alpha-D-Man-(1-&gt;2)-alpha-D-Man-(1-&gt;2)-alpha-D-Man-(1-&gt;3)-[alpha-D-Man-(1-&gt;2)-alpha-D-Man-(1-&gt;3)-alpha-D-Man-(1-&gt;6)]-beta-D-Man-(1-&gt;4)-beta-D-GlcNAc-(1-&gt;4)-alpha-D-GlcNAc-diphospho-di-trans,poly-cis-dolichol + a di-trans,poly-cis-dolichyl beta-D-mannosyl phosphate = an alpha-D-Man-(1-&gt;2)-alpha-D-Man-(1-&gt;2)-alpha-D-Man-(1-&gt;3)-[alpha-D-Man-(1-&gt;2)-alpha-D-Man-(1-&gt;3)-[alpha-D-Man-(1-&gt;6)]-alpha-D-Man-(1-&gt;6)]-beta-D-Man-(1-&gt;4)-beta-D-GlcNAc-(1-&gt;4)-alpha-D-GlcNAc-diphospho-di-trans,poly-cis-dolichol + a di-trans,poly-cis-dolichyl phosphate + H(+). It functions in the pathway protein modification; protein glycosylation. Functionally, mannosyltransferase that operates in the biosynthetic pathway of dolichol-linked oligosaccharides, the glycan precursors employed in protein asparagine (N)-glycosylation. The assembly of dolichol-linked oligosaccharides begins on the cytosolic side of the endoplasmic reticulum membrane and finishes in its lumen. The sequential addition of sugars to dolichol pyrophosphate produces dolichol-linked oligosaccharides containing fourteen sugars, including two GlcNAcs, nine mannoses and three glucoses. Once assembled, the oligosaccharide is transferred from the lipid to nascent proteins by oligosaccharyltransferases. In the lumen of the endoplasmic reticulum, adds the eighth mannose residue in an alpha-1,6 linkage onto Man(7)GlcNAc(2)-PP-dolichol to produce Man(8)GlcNAc(2)-PP-dolichol. The protein is Probable Dol-P-Man:Man(7)GlcNAc(2)-PP-Dol alpha-1,6-mannosyltransferase (alg12) of Schizosaccharomyces pombe (strain 972 / ATCC 24843) (Fission yeast).